Consider the following 214-residue polypeptide: ATP synthase subunit a (214 aa).

Helical transmembrane passes span 9 to 29, 64 to 84, 88 to 108, 121 to 141, 150 to 170, and 182 to 202; these read LDGMTSLWSWLTPMFLSVFMI, IMMVLIIFNNLLGMAPFTYGI, LWVNMTLALLLWGLILLSGYI, SGAPLLLLPFLILIESISIMI, LVANMSAGHIILALMASVLSS, and LIMVGYYLFEFFVCFIQAYIF.

This sequence belongs to the ATPase A chain family. F-type ATPases have 2 components, CF(1) - the catalytic core - and CF(0) - the membrane proton channel. CF(1) has five subunits: alpha(3), beta(3), gamma(1), delta(1), epsilon(1). CF(0) has three main subunits: a, b and c.

It is found in the mitochondrion inner membrane. In terms of biological role, mitochondrial membrane ATP synthase (F(1)F(0) ATP synthase or Complex V) produces ATP from ADP in the presence of a proton gradient across the membrane which is generated by electron transport complexes of the respiratory chain. F-type ATPases consist of two structural domains, F(1) - containing the extramembraneous catalytic core and F(0) - containing the membrane proton channel, linked together by a central stalk and a peripheral stalk. During catalysis, ATP synthesis in the catalytic domain of F(1) is coupled via a rotary mechanism of the central stalk subunits to proton translocation. Key component of the proton channel; it may play a direct role in the translocation of protons across the membrane. The chain is ATP synthase subunit a (ATP6) from Albinaria caerulea (Land snail).